A 199-amino-acid polypeptide reads, in one-letter code: Transgelin-3 (199 aa).

Residues 24-136 enclose the Calponin-homology (CH) domain; sequence ADLENKLVDW…RTLMALGSVA (113 aa). S163 bears the Phosphoserine mark. Residues 174 to 199 form a Calponin-like repeat; it reads IGLQMGSNKGASQAGMTGYGMPRQIM. Polar residues predominate over residues 178-188; that stretch reads MGSNKGASQAG. The tract at residues 178–199 is disordered; that stretch reads MGSNKGASQAGMTGYGMPRQIM.

It belongs to the calponin family.

The sequence is that of Transgelin-3 (TAGLN3) from Bos taurus (Bovine).